The sequence spans 465 residues: GDNF family receptor alpha-2 (465 aa).

The signal sequence occupies residues 1–21 (MILANAFCIVLFVDETLRSLA). Disulfide bonds link cysteine 40/cysteine 93, cysteine 47/cysteine 53, cysteine 63/cysteine 78, cysteine 95/cysteine 105, cysteine 159/cysteine 220, cysteine 166/cysteine 172, cysteine 183/cysteine 198, cysteine 193/cysteine 239, cysteine 222/cysteine 227, cysteine 249/cysteine 321, cysteine 256/cysteine 262, cysteine 273/cysteine 291, cysteine 283/cysteine 345, and cysteine 323/cysteine 333. N-linked (GlcNAc...) asparagine glycosylation is found at asparagine 355, asparagine 387, and asparagine 412. The GPI-anchor amidated serine moiety is linked to residue serine 445. Positions 446 to 465 (RHRAARILPAVPIVLLKLLL) are cleaved as a propeptide — removed in mature form.

The protein belongs to the GDNFR family. Interacts with NRTN ligand and RET: forms a 2:2:2 ternary complex composed of NRTN ligand, GFRA2 and RET receptor.

The protein resides in the cell membrane. Its function is as follows. Receptor for neurturin (NRTN), a growth factor that supports the survival of sympathetic neurons. NRTN-binding leads to autophosphorylation and activation of the RET receptor. The chain is GDNF family receptor alpha-2 (GFRA2) from Gallus gallus (Chicken).